The sequence spans 235 residues: Small ribosomal subunit protein uS2 (235 aa).

Belongs to the universal ribosomal protein uS2 family.

The sequence is that of Small ribosomal subunit protein uS2 from Geobacillus sp. (strain WCH70).